The primary structure comprises 388 residues: tRNA (guanine(26)-N(2))-dimethyltransferase (388 aa).

The region spanning 4 to 383 is the Trm1 methyltransferase domain; sequence RTIVEGTTKI…APIAEIKKII (380 aa). R41, R78, D94, and A123 together coordinate S-adenosyl-L-methionine. Zn(2+) is bound by residues C251, C254, C271, and C274.

The protein belongs to the class I-like SAM-binding methyltransferase superfamily. Trm1 family.

The enzyme catalyses guanosine(26) in tRNA + 2 S-adenosyl-L-methionine = N(2)-dimethylguanosine(26) in tRNA + 2 S-adenosyl-L-homocysteine + 2 H(+). Its function is as follows. Dimethylates a single guanine residue at position 26 of a number of tRNAs using S-adenosyl-L-methionine as donor of the methyl groups. This chain is tRNA (guanine(26)-N(2))-dimethyltransferase, found in Methanosarcina acetivorans (strain ATCC 35395 / DSM 2834 / JCM 12185 / C2A).